Consider the following 226-residue polypeptide: Movement and silencing protein TGBp1 (226 aa).

The (+)RNA virus helicase ATP-binding domain occupies 1–138 (MDILIISLKS…IASCGFDFET (138 aa)). A (+)RNA virus helicase C-terminal domain is found at 139–226 (NSQEEGHLEI…KGLTYVRAGA (88 aa)).

Belongs to the Tymovirales TGBp1 protein family. As to quaternary structure, homodimer and homooligomer. Interacts with capsid protein. Interacts with host AGO1; this interaction targets the host protein for degradation, thereby suppressing the antiviral RNA silencing.

The protein localises to the host cytoplasm. In terms of biological role, transports viral genome to neighboring plant cells directly through plasmosdesmata, without any budding. The movement protein allows efficient cell to cell propagation, by bypassing the host cell wall barrier. Increases plasmodesma size exclusion limit. Acts as a suppressor of RNA-mediated gene silencing, also known as post-transcriptional gene silencing (PTGS), a mechanism of plant viral defense that limits the accumulation of viral RNAs. In Brassica campestris (Field mustard), this protein is Movement and silencing protein TGBp1.